Here is a 310-residue protein sequence, read N- to C-terminus: Acetyl-coenzyme A carboxylase carboxyl transferase subunit alpha (310 aa).

Positions N36–E286 constitute a CoA carboxyltransferase C-terminal domain.

The protein belongs to the AccA family. As to quaternary structure, acetyl-CoA carboxylase is a heterohexamer composed of biotin carboxyl carrier protein (AccB), biotin carboxylase (AccC) and two subunits each of ACCase subunit alpha (AccA) and ACCase subunit beta (AccD).

Its subcellular location is the cytoplasm. The catalysed reaction is N(6)-carboxybiotinyl-L-lysyl-[protein] + acetyl-CoA = N(6)-biotinyl-L-lysyl-[protein] + malonyl-CoA. Its pathway is lipid metabolism; malonyl-CoA biosynthesis; malonyl-CoA from acetyl-CoA: step 1/1. Component of the acetyl coenzyme A carboxylase (ACC) complex. First, biotin carboxylase catalyzes the carboxylation of biotin on its carrier protein (BCCP) and then the CO(2) group is transferred by the carboxyltransferase to acetyl-CoA to form malonyl-CoA. This is Acetyl-coenzyme A carboxylase carboxyl transferase subunit alpha from Campylobacter fetus subsp. fetus (strain 82-40).